Reading from the N-terminus, the 297-residue chain is N-acetylmuramic acid 6-phosphate etherase (297 aa).

An SIS domain is found at A55–K218. The active-site Proton donor is E83. The active site involves E114.

Belongs to the GCKR-like family. MurNAc-6-P etherase subfamily. As to quaternary structure, homodimer.

It carries out the reaction N-acetyl-D-muramate 6-phosphate + H2O = N-acetyl-D-glucosamine 6-phosphate + (R)-lactate. Its pathway is amino-sugar metabolism; 1,6-anhydro-N-acetylmuramate degradation. It functions in the pathway amino-sugar metabolism; N-acetylmuramate degradation. It participates in cell wall biogenesis; peptidoglycan recycling. Its function is as follows. Specifically catalyzes the cleavage of the D-lactyl ether substituent of MurNAc 6-phosphate, producing GlcNAc 6-phosphate and D-lactate. Together with AnmK, is also required for the utilization of anhydro-N-acetylmuramic acid (anhMurNAc) either imported from the medium or derived from its own cell wall murein, and thus plays a role in cell wall recycling. This is N-acetylmuramic acid 6-phosphate etherase from Salmonella paratyphi B (strain ATCC BAA-1250 / SPB7).